We begin with the raw amino-acid sequence, 121 residues long: Small ribosomal subunit protein uS13 (121 aa).

Residues 96-121 form a disordered region; that stretch reads PVRGQNTKNNARTRKGKAVAIAGKKK. Residues 106–121 are compositionally biased toward basic residues; it reads ARTRKGKAVAIAGKKK.

It belongs to the universal ribosomal protein uS13 family. As to quaternary structure, part of the 30S ribosomal subunit. Forms a loose heterodimer with protein S19. Forms two bridges to the 50S subunit in the 70S ribosome.

Located at the top of the head of the 30S subunit, it contacts several helices of the 16S rRNA. In the 70S ribosome it contacts the 23S rRNA (bridge B1a) and protein L5 of the 50S subunit (bridge B1b), connecting the 2 subunits; these bridges are implicated in subunit movement. Contacts the tRNAs in the A and P-sites. The protein is Small ribosomal subunit protein uS13 of Streptococcus suis (strain 05ZYH33).